Here is a 105-residue protein sequence, read N- to C-terminus: Large ribosomal subunit protein uL24 (105 aa).

This sequence belongs to the universal ribosomal protein uL24 family. In terms of assembly, part of the 50S ribosomal subunit.

Functionally, one of two assembly initiator proteins, it binds directly to the 5'-end of the 23S rRNA, where it nucleates assembly of the 50S subunit. In terms of biological role, one of the proteins that surrounds the polypeptide exit tunnel on the outside of the subunit. This Aliivibrio salmonicida (strain LFI1238) (Vibrio salmonicida (strain LFI1238)) protein is Large ribosomal subunit protein uL24.